Reading from the N-terminus, the 124-residue chain is Fluoride-specific ion channel FluC (124 aa).

The next 4 membrane-spanning stretches (helical) occupy residues 4 to 24, 35 to 55, 62 to 82, and 95 to 115; these read VLFVALGGSIGAVLRYLISLL, FGTLVVNILGSFLMGVIFALG, PEFKAFIGVGMLGALTTFSTF, and LVKAVFNVVVNVGVCIFVVYL. Residues Gly74 and Thr77 each contribute to the Na(+) site.

It belongs to the fluoride channel Fluc/FEX (TC 1.A.43) family.

The protein resides in the cell inner membrane. The enzyme catalyses fluoride(in) = fluoride(out). Na(+) is not transported, but it plays an essential structural role and its presence is essential for fluoride channel function. Functionally, fluoride-specific ion channel. Important for reducing fluoride concentration in the cell, thus reducing its toxicity. The sequence is that of Fluoride-specific ion channel FluC from Shewanella pealeana (strain ATCC 700345 / ANG-SQ1).